A 354-amino-acid polypeptide reads, in one-letter code: Heme A synthase (354 aa).

Helical transmembrane passes span 21–41 (VAVW…LGGL), 106–126 (VWGR…ALSG), 139–159 (VFLL…SGLV), 171–191 (AHLA…LDIL), 212–232 (MLGL…VAGL), 268–288 (VQFG…VGWF), 304–324 (AVGL…VMVV), and 326–346 (VWLA…CLWA). Residue His272 coordinates heme. Residue His332 participates in heme binding.

Belongs to the COX15/CtaA family. Type 2 subfamily. Interacts with CtaB. Requires heme b as cofactor.

The protein localises to the cell membrane. It catalyses the reaction Fe(II)-heme o + 2 A + H2O = Fe(II)-heme a + 2 AH2. It functions in the pathway porphyrin-containing compound metabolism; heme A biosynthesis; heme A from heme O: step 1/1. Catalyzes the conversion of heme O to heme A by two successive hydroxylations of the methyl group at C8. The first hydroxylation forms heme I, the second hydroxylation results in an unstable dihydroxymethyl group, which spontaneously dehydrates, resulting in the formyl group of heme A. In Paramagnetospirillum magneticum (strain ATCC 700264 / AMB-1) (Magnetospirillum magneticum), this protein is Heme A synthase.